The sequence spans 163 residues: Ribosome maturation factor RimP (163 aa).

The protein belongs to the RimP family.

It localises to the cytoplasm. Its function is as follows. Required for maturation of 30S ribosomal subunits. This is Ribosome maturation factor RimP from Bordetella petrii (strain ATCC BAA-461 / DSM 12804 / CCUG 43448).